A 434-amino-acid polypeptide reads, in one-letter code: Adenylosuccinate synthetase (434 aa).

GTP-binding positions include 12–18 (GDEGKGK) and 40–42 (GHT). The active-site Proton acceptor is Asp-13. Residues Asp-13 and Gly-40 each contribute to the Mg(2+) site. Residues 13-16 (DEGK), 38-41 (NAGH), Thr-129, Arg-143, Gln-224, Thr-239, and Arg-303 contribute to the IMP site. The Proton donor role is filled by His-41. Substrate is bound at residue 299 to 305 (AVTGRPR). GTP contacts are provided by residues Arg-305, 331-333 (KLD), and 413-415 (STG).

It belongs to the adenylosuccinate synthetase family. As to quaternary structure, homodimer. Mg(2+) is required as a cofactor.

It localises to the cytoplasm. The catalysed reaction is IMP + L-aspartate + GTP = N(6)-(1,2-dicarboxyethyl)-AMP + GDP + phosphate + 2 H(+). Its pathway is purine metabolism; AMP biosynthesis via de novo pathway; AMP from IMP: step 1/2. Plays an important role in the de novo pathway of purine nucleotide biosynthesis. Catalyzes the first committed step in the biosynthesis of AMP from IMP. In Solibacter usitatus (strain Ellin6076), this protein is Adenylosuccinate synthetase.